The primary structure comprises 431 residues: Serine hydroxymethyltransferase 3 (431 aa).

Residues L131 and 135–137 (GHL) contribute to the (6S)-5,6,7,8-tetrahydrofolate site. K240 bears the N6-(pyridoxal phosphate)lysine mark.

The protein belongs to the SHMT family. Homodimer. Pyridoxal 5'-phosphate serves as cofactor.

The protein localises to the cytoplasm. It catalyses the reaction (6R)-5,10-methylene-5,6,7,8-tetrahydrofolate + glycine + H2O = (6S)-5,6,7,8-tetrahydrofolate + L-serine. Its pathway is one-carbon metabolism; tetrahydrofolate interconversion. The protein operates within amino-acid biosynthesis; glycine biosynthesis; glycine from L-serine: step 1/1. In terms of biological role, catalyzes the reversible interconversion of serine and glycine with tetrahydrofolate (THF) serving as the one-carbon carrier. This reaction serves as the major source of one-carbon groups required for the biosynthesis of purines, thymidylate, methionine, and other important biomolecules. Also exhibits THF-independent aldolase activity toward beta-hydroxyamino acids, producing glycine and aldehydes, via a retro-aldol mechanism. The chain is Serine hydroxymethyltransferase 3 from Colwellia psychrerythraea (strain 34H / ATCC BAA-681) (Vibrio psychroerythus).